The sequence spans 461 residues: GTPase Der (461 aa).

EngA-type G domains follow at residues 3–167 (PQVI…GEKQ) and 190–371 (LKLA…AAWS). GTP is bound by residues 9-16 (GRPNVGKS), 56-60 (DTAGW), 119-122 (NKAE), 196-203 (GRPNAGKS), 249-253 (DTAGM), and 314-317 (NKWD). The KH-like domain occupies 372–456 (KRVPTAALNR…PIRLTLRSPK (85 aa)).

It belongs to the TRAFAC class TrmE-Era-EngA-EngB-Septin-like GTPase superfamily. EngA (Der) GTPase family. In terms of assembly, associates with the 50S ribosomal subunit.

In terms of biological role, GTPase that plays an essential role in the late steps of ribosome biogenesis. The polypeptide is GTPase Der (Novosphingobium aromaticivorans (strain ATCC 700278 / DSM 12444 / CCUG 56034 / CIP 105152 / NBRC 16084 / F199)).